The chain runs to 291 residues: Citrate lyase subunit beta (291 aa).

Residues Arg-66 and Glu-129 each coordinate substrate. Residues Glu-129 and Asp-156 each coordinate Mg(2+).

Belongs to the HpcH/HpaI aldolase family. Citrate lyase beta subunit subfamily. As to quaternary structure, oligomer with a subunit composition of (alpha,beta,gamma)6. The cofactor is Mg(2+).

The protein localises to the cytoplasm. It carries out the reaction citrate = oxaloacetate + acetate. It catalyses the reaction (3S)-citryl-CoA = oxaloacetate + acetyl-CoA. Its function is as follows. Represents a citryl-ACP lyase. This chain is Citrate lyase subunit beta (citE), found in Haemophilus influenzae (strain ATCC 51907 / DSM 11121 / KW20 / Rd).